The chain runs to 352 residues: Putative hetero-Diels-Alderase (352 aa).

The first 20 residues, 1-20 (MRYHLSALVLVFTAFRETLT), serve as a signal peptide directing secretion. N-linked (GlcNAc...) asparagine glycans are attached at residues Asn-26, Asn-41, Asn-47, Asn-135, Asn-211, and Asn-310.

It belongs to the eupF Diels-Alderase family.

Its pathway is secondary metabolite biosynthesis; terpenoid biosynthesis. Its function is as follows. Putative hetero-Diels-Alderase; part of the gene cluster that mediates the biosynthesis of eupenifeldin, a bistropolone meroterpenoid that acts as an antitumor agent. The first step of eupenifeldin biosynthesis is the biosynthesis of 3-methylorcinaldehyde performed by the non-reducing polyketide synthase eupA. Oxidative dearomatization of 3-methylorcinaldehyde likely catalyzed by the FAD-dependent monooxygenase eupB is followed by oxidative ring expansion by the 2-oxoglutarate-dependent dioxygenase eupC to provide the first tropolone metabolite, tropolone stipitaldehyde. In parallel, generation of sesquiterpene alpha-humulene from farnesylpyrophosphate (FPP) is catalyzed by the terpene cyclase eupE. The cytochrome P450 monooxygenase eupD then hydroxylates humulene to humulenol. The putative Diels-Alderase eupF probably catalyzes the formation of the tropolone-humulene skeleton by linking humulenol and the polyketide moiety. The short-chain dehydrogenase/reductase eupG and the flavin-dependent monooxygenase eupH are also essential for eupenifeldin biosynthesis and are likely the additional decorating enzymes of the tropolone-humulene skeleton to produce final eupenifeldin or derivatives. This Phoma sp protein is Putative hetero-Diels-Alderase.